Here is a 197-residue protein sequence, read N- to C-terminus: MATPTNNYNTIVGSPMPTATTAATTTTVTPTQKELNIEDLQLFPSILDIISRIKDDEIDLIRAINLANETRTKTIETLNKLPGINRSLENQEELLKTYKQTLKKKVELLEKLKKLEIFEKYNKIKSTSSQSPQIQSKLELQTELSQTEPSQTEPSQTEPSQTEPSQTESSQIESSQIESSQTETEKSKETTEDIMKE.

Residues 83–117 (GINRSLENQEELLKTYKQTLKKKVELLEKLKKLEI) are a coiled coil. Positions 126–144 (STSSQSPQIQSKLELQTEL) are enriched in polar residues. Residues 126–197 (STSSQSPQIQ…KETTEDIMKE (72 aa)) form a disordered region. Low complexity predominate over residues 145 to 182 (SQTEPSQTEPSQTEPSQTEPSQTESSQIESSQIESSQT). The span at 183–197 (ETEKSKETTEDIMKE) shows a compositional bias: basic and acidic residues.

This sequence belongs to the Mediator complex subunit 9 family. In terms of assembly, component of the Mediator complex.

It is found in the nucleus. Functionally, component of the Mediator complex, a coactivator involved in the regulated transcription of nearly all RNA polymerase II-dependent genes. Mediator functions as a bridge to convey information from gene-specific regulatory proteins to the basal RNA polymerase II transcription machinery. Mediator is recruited to promoters by direct interactions with regulatory proteins and serves as a scaffold for the assembly of a functional preinitiation complex with RNA polymerase II and the general transcription factors. This is Putative mediator of RNA polymerase II transcription subunit 9 (med9) from Dictyostelium discoideum (Social amoeba).